Consider the following 614-residue polypeptide: V-type proton ATPase catalytic subunit A (614 aa).

Glycine 247–threonine 254 is a binding site for ATP.

The protein belongs to the ATPase alpha/beta chains family. As to quaternary structure, V-ATPase is a heteromultimeric enzyme made up of two complexes: the ATP-hydrolytic V1 complex and the proton translocation V0 complex. The V1 complex consists of three catalytic AB heterodimers that form a heterohexamer, three peripheral stalks each consisting of EG heterodimers, one central rotor including subunits D and F, and the regulatory subunits C and H. The proton translocation complex V0 consists of the proton transport subunit a, a ring of proteolipid subunits c9c'', rotary subunit d, subunits e and f, and the accessory subunits VhaAC45 and ATP6AP2.

The enzyme catalyses ATP + H2O + 4 H(+)(in) = ADP + phosphate + 5 H(+)(out). With respect to regulation, ATP hydrolysis occurs at the interface between the nucleotide-binding domains of subunits A and B. ATP hydrolysis triggers a conformational change in the subunits D and F, which induces a shift of subunit d. The c-ring is subsequently rotated and results in a continuous proton translocation across the membrane. Catalytic subunit of the V1 complex of vacuolar(H+)-ATPase (V-ATPase), a multisubunit enzyme composed of a peripheral complex (V1) that hydrolyzes ATP and a membrane integral complex (V0) that translocates protons. V-ATPase is responsible for acidifying and maintaining the pH of intracellular compartments and in some cell types, is targeted to the plasma membrane, where it is responsible for acidifying the extracellular environment. The chain is V-type proton ATPase catalytic subunit A (VhaA) from Aedes aegypti (Yellowfever mosquito).